The following is a 385-amino-acid chain: Polyketide synthase 4 (385 aa).

Cys-157 is a catalytic residue.

Belongs to the thiolase-like superfamily. Chalcone/stilbene synthases family. In terms of tissue distribution, expressed in glandular trichomes.

Its subcellular location is the cytoplasm. Functionally, polyketide synthase responsible for the biosynthesis of secondary metabolites. This chain is Polyketide synthase 4 (PKSG4), found in Cannabis sativa (Hemp).